The sequence spans 287 residues: ATP phosphoribosyltransferase (287 aa).

This sequence belongs to the ATP phosphoribosyltransferase family. Long subfamily. It depends on Mg(2+) as a cofactor.

It is found in the cytoplasm. It catalyses the reaction 1-(5-phospho-beta-D-ribosyl)-ATP + diphosphate = 5-phospho-alpha-D-ribose 1-diphosphate + ATP. Its pathway is amino-acid biosynthesis; L-histidine biosynthesis; L-histidine from 5-phospho-alpha-D-ribose 1-diphosphate: step 1/9. Its activity is regulated as follows. Feedback inhibited by histidine. Its function is as follows. Catalyzes the condensation of ATP and 5-phosphoribose 1-diphosphate to form N'-(5'-phosphoribosyl)-ATP (PR-ATP). Has a crucial role in the pathway because the rate of histidine biosynthesis seems to be controlled primarily by regulation of HisG enzymatic activity. The chain is ATP phosphoribosyltransferase (hisG) from Methanothermobacter thermautotrophicus (strain ATCC 29096 / DSM 1053 / JCM 10044 / NBRC 100330 / Delta H) (Methanobacterium thermoautotrophicum).